The following is a 292-amino-acid chain: Homeobox-leucine zipper protein HOX19 (292 aa).

Disordered stretches follow at residues 14 to 85 (LALG…HSVS), 99 to 133 (RERA…RLTK), and 217 to 236 (FAPP…PPAP). Low complexity predominate over residues 28 to 74 (TDAAAAHRGGCRRPSPSSQCPPLEPSLTLSLPDDAAAGAAATATATA). Residues 99–109 (RERAEEADGER) show a composition bias toward basic and acidic residues. Positions 124-183 (STRKKLRLTKEQSALLEDRFREHSTLNPKQKVALAKQLNLRPRQVEVWFQNRRARTKLKQ) form a DNA-binding region, homeobox. A leucine-zipper region spans residues 182–226 (KQTEVDCEFLKRCCETLTEENRRLQRELQELRALKFAPPPPSSAA).

It belongs to the HD-ZIP homeobox family. Class II subfamily. As to expression, expressed in seedlings, roots, stems, leaf sheaths and blades and panicles.

It localises to the nucleus. Probable transcription factor. This is Homeobox-leucine zipper protein HOX19 (HOX19) from Oryza sativa subsp. japonica (Rice).